A 565-amino-acid polypeptide reads, in one-letter code: Periplasmic trehalase (565 aa).

A signal peptide spans 1–30; that stretch reads MKSPAPSRPQKMALIPACIFLCFAALSVQA. Residues arginine 152, 159–160, asparagine 196, 205–207, 277–279, and glycine 310 contribute to the substrate site; these read WD, RSQ, and RPE. Catalysis depends on proton donor/acceptor residues aspartate 312 and glutamate 496. Glutamate 511 lines the substrate pocket. The disordered stretch occupies residues 539–565; the sequence is CDNVPATRPLSESTTQPVKQKEAEPTP.

The protein belongs to the glycosyl hydrolase 37 family. In terms of assembly, monomer.

It is found in the periplasm. It carries out the reaction alpha,alpha-trehalose + H2O = alpha-D-glucose + beta-D-glucose. Provides the cells with the ability to utilize trehalose at high osmolarity by splitting it into glucose molecules that can subsequently be taken up by the phosphotransferase-mediated uptake system. The polypeptide is Periplasmic trehalase (Escherichia coli O17:K52:H18 (strain UMN026 / ExPEC)).